The sequence spans 511 residues: Vicilin-like seed storage protein At2g28490 (511 aa).

The first 27 residues, 1 to 27 (MEKNKRAIGFLLLVVLINGVMMTRSNG), serve as a signal peptide directing secretion. Residues 54 to 81 (GGGGGGAWGGEGEGGGEWGGGGEGGGGG) form a disordered region. Cupin type-1 domains are found at residues 86 to 238 (FMMR…PELQ) and 329 to 480 (YNIY…ETMR). N-linked (GlcNAc...) asparagine glycans are attached at residues Asn231, Asn369, Asn403, and Asn464.

It belongs to the 7S seed storage protein family.

Functionally, seed storage protein. The chain is Vicilin-like seed storage protein At2g28490 from Arabidopsis thaliana (Mouse-ear cress).